The following is a 190-amino-acid chain: GTP cyclohydrolase 1 (190 aa).

3 residues coordinate Zn(2+): Cys-75, His-78, and Cys-146.

This sequence belongs to the GTP cyclohydrolase I family. As to quaternary structure, homomer.

The catalysed reaction is GTP + H2O = 7,8-dihydroneopterin 3'-triphosphate + formate + H(+). It participates in cofactor biosynthesis; 7,8-dihydroneopterin triphosphate biosynthesis; 7,8-dihydroneopterin triphosphate from GTP: step 1/1. This chain is GTP cyclohydrolase 1, found in Campylobacter jejuni subsp. jejuni serotype O:6 (strain 81116 / NCTC 11828).